The following is a 100-amino-acid chain: U12-ctenitoxin-Pn1a (100 aa).

The first 28 residues, 1 to 28 (MKYRIFKMKYTLLFLSVIALVHIFAVEA), serve as a signal peptide directing secretion. Positions 29-41 (KDEPESDALVPQE) are excised as a propeptide. 5 disulfides stabilise this stretch: C44-C58, C51-C64, C57-C82, C66-C80, and C90-C97.

This sequence belongs to the neurotoxin 09 (Tx3-6) family. Expressed by the venom gland.

It localises to the secreted. Probable neurotoxin. The protein is U12-ctenitoxin-Pn1a of Phoneutria nigriventer (Brazilian armed spider).